Consider the following 188-residue polypeptide: MKIPYARLEKGSLLVASPDINQGVFARSVILLCEHSLNGSFGLILNKTLGFEISDDIFTFEKVSNHNIRFCMGGPLQANQMMLLHSCSEIPEQTLEICPSVYLGGDLPFLQEIASSESGPEINLCFGYSGWQAGQLEKEFLSNDWFLAPGNKDYVFYSEPEDLWALVLKDLGGKYASLSTVPDNLLLN.

This sequence belongs to the UPF0301 (AlgH) family.

The protein is UPF0301 protein CPn_0139/CP_0633/CPj0139/CpB0140 of Chlamydia pneumoniae (Chlamydophila pneumoniae).